A 233-amino-acid chain; its full sequence is MTEYHVRIRELPPTDKPRERLRSSGAAALADAELLAILLRVGIEGMNAIQLAQQLLVEFGGWNGLQRAGFEELAQRRGMGEAKTAQLKAALEIGRRLLLAGGDERFLIRSPTDAAQLMQIEMSHLDQEQLRAICLDTKNRVQKIQTVYIGSLHTSMVRIGEIFKEPIRLNSASIIVVHNHPSGDPTPSPEDVVVTRQIIEAGRLLDIDVLDHLVIGAGRFVSMRERGLGFGKP.

Residues 107 to 229 (LIRSPTDAAQ…FVSMRERGLG (123 aa)) form the MPN domain. The Zn(2+) site is built by His178, His180, and Asp191. A JAMM motif motif is present at residues 178–191 (HNHPSGDPTPSPED).

Belongs to the UPF0758 family.

This chain is UPF0758 protein RoseRS_0767, found in Roseiflexus sp. (strain RS-1).